Here is a 212-residue protein sequence, read N- to C-terminus: Octanoyltransferase (212 aa).

The region spanning Gly-33 to Asp-212 is the BPL/LPL catalytic domain. Substrate contacts are provided by residues Arg-72 to His-79, Ala-144 to Gly-146, and Gly-157 to Ala-159. Catalysis depends on Cys-175, which acts as the Acyl-thioester intermediate.

It belongs to the LipB family.

It is found in the cytoplasm. The enzyme catalyses octanoyl-[ACP] + L-lysyl-[protein] = N(6)-octanoyl-L-lysyl-[protein] + holo-[ACP] + H(+). The protein operates within protein modification; protein lipoylation via endogenous pathway; protein N(6)-(lipoyl)lysine from octanoyl-[acyl-carrier-protein]: step 1/2. Functionally, catalyzes the transfer of endogenously produced octanoic acid from octanoyl-acyl-carrier-protein onto the lipoyl domains of lipoate-dependent enzymes. Lipoyl-ACP can also act as a substrate although octanoyl-ACP is likely to be the physiological substrate. This Paramagnetospirillum magneticum (strain ATCC 700264 / AMB-1) (Magnetospirillum magneticum) protein is Octanoyltransferase.